The chain runs to 122 residues: Ribosome-binding factor A (122 aa).

Belongs to the RbfA family. In terms of assembly, monomer. Binds 30S ribosomal subunits, but not 50S ribosomal subunits or 70S ribosomes.

It is found in the cytoplasm. One of several proteins that assist in the late maturation steps of the functional core of the 30S ribosomal subunit. Associates with free 30S ribosomal subunits (but not with 30S subunits that are part of 70S ribosomes or polysomes). Required for efficient processing of 16S rRNA. May interact with the 5'-terminal helix region of 16S rRNA. This chain is Ribosome-binding factor A, found in Caldanaerobacter subterraneus subsp. tengcongensis (strain DSM 15242 / JCM 11007 / NBRC 100824 / MB4) (Thermoanaerobacter tengcongensis).